Here is a 959-residue protein sequence, read N- to C-terminus: Transcription factor 1 (959 aa).

C2H2-type zinc fingers lie at residues 2-24 (VFCT…ILTH) and 30-52 (FKCF…YTVH). A DNA-binding region (zn(2)-C6 fungal-type) is located at residues 79-105 (CSNCAKTKTKCDKKFPCSRCASRNLRC). Residues 154–226 (PTGHVEESSK…SFPGFDDYNQ (73 aa)) are disordered. Positions 163 to 178 (KSSSPSGSPTSISHNS) are enriched in low complexity.

It is found in the nucleus. Its function is as follows. Elsinochromes biosynthesis cluster-specific transcription factor that positively regulates the expression of cluster genes including RDT1, PKS1, PRF1 and HP1, and subsequent elsinochromes production. The polypeptide is Transcription factor 1 (Elsinoe fawcettii (Citrus scab fungus)).